We begin with the raw amino-acid sequence, 282 residues long: 4-hydroxy-3-methylbut-2-enyl diphosphate reductase (282 aa).

Cysteine 12 serves as a coordination point for [4Fe-4S] cluster. Residues histidine 40 and histidine 72 each coordinate (2E)-4-hydroxy-3-methylbut-2-enyl diphosphate. Residues histidine 40 and histidine 72 each contribute to the dimethylallyl diphosphate site. The isopentenyl diphosphate site is built by histidine 40 and histidine 72. Cysteine 94 contacts [4Fe-4S] cluster. A (2E)-4-hydroxy-3-methylbut-2-enyl diphosphate-binding site is contributed by histidine 122. Residue histidine 122 participates in dimethylallyl diphosphate binding. Residue histidine 122 participates in isopentenyl diphosphate binding. Catalysis depends on glutamate 124, which acts as the Proton donor. Threonine 160 provides a ligand contact to (2E)-4-hydroxy-3-methylbut-2-enyl diphosphate. Cysteine 188 lines the [4Fe-4S] cluster pocket. Positions 216, 218, and 260 each coordinate (2E)-4-hydroxy-3-methylbut-2-enyl diphosphate. The dimethylallyl diphosphate site is built by serine 216, asparagine 218, and serine 260. Isopentenyl diphosphate contacts are provided by serine 216, asparagine 218, and serine 260.

The protein belongs to the IspH family. [4Fe-4S] cluster is required as a cofactor.

It catalyses the reaction isopentenyl diphosphate + 2 oxidized [2Fe-2S]-[ferredoxin] + H2O = (2E)-4-hydroxy-3-methylbut-2-enyl diphosphate + 2 reduced [2Fe-2S]-[ferredoxin] + 2 H(+). The enzyme catalyses dimethylallyl diphosphate + 2 oxidized [2Fe-2S]-[ferredoxin] + H2O = (2E)-4-hydroxy-3-methylbut-2-enyl diphosphate + 2 reduced [2Fe-2S]-[ferredoxin] + 2 H(+). It functions in the pathway isoprenoid biosynthesis; dimethylallyl diphosphate biosynthesis; dimethylallyl diphosphate from (2E)-4-hydroxy-3-methylbutenyl diphosphate: step 1/1. Its pathway is isoprenoid biosynthesis; isopentenyl diphosphate biosynthesis via DXP pathway; isopentenyl diphosphate from 1-deoxy-D-xylulose 5-phosphate: step 6/6. Catalyzes the conversion of 1-hydroxy-2-methyl-2-(E)-butenyl 4-diphosphate (HMBPP) into a mixture of isopentenyl diphosphate (IPP) and dimethylallyl diphosphate (DMAPP). Acts in the terminal step of the DOXP/MEP pathway for isoprenoid precursor biosynthesis. The sequence is that of 4-hydroxy-3-methylbut-2-enyl diphosphate reductase from Geobacter sulfurreducens (strain ATCC 51573 / DSM 12127 / PCA).